A 248-amino-acid polypeptide reads, in one-letter code: Putative transposase YncI (248 aa).

It belongs to the transposase 11 family.

In Escherichia coli (strain K12), this protein is Putative transposase YncI (yncI).